A 305-amino-acid polypeptide reads, in one-letter code: Homoserine O-acetyltransferase (305 aa).

The active-site Acyl-thioester intermediate is the Cys-142. Residues Lys-163 and Ser-192 each contribute to the substrate site. The active-site Proton acceptor is the His-235. Glu-237 is an active-site residue. Substrate is bound at residue Arg-249.

Belongs to the MetA family.

Its subcellular location is the cytoplasm. The catalysed reaction is L-homoserine + acetyl-CoA = O-acetyl-L-homoserine + CoA. It participates in amino-acid biosynthesis; L-methionine biosynthesis via de novo pathway; O-acetyl-L-homoserine from L-homoserine: step 1/1. Functionally, transfers an acetyl group from acetyl-CoA to L-homoserine, forming acetyl-L-homoserine. In Phocaeicola vulgatus (strain ATCC 8482 / DSM 1447 / JCM 5826 / CCUG 4940 / NBRC 14291 / NCTC 11154) (Bacteroides vulgatus), this protein is Homoserine O-acetyltransferase.